We begin with the raw amino-acid sequence, 389 residues long: Dirigent protein 25 (389 aa).

An N-terminal signal peptide occupies residues 1–21 (MAGCKVLFFLILALAITFVSA). Low complexity-rich tracts occupy residues 50-68 (GPFPTANSGPATGIASGTG), 77-86 (LGTNTGPGPL), and 98-135 (SSGTLPVTGPGPLPTSSGLLPGASSGNLPGSGSGPLPT). The segment at 50–135 (GPFPTANSGP…PGSGSGPLPT (86 aa)) is disordered.

The protein belongs to the plant dirigent protein family. In terms of assembly, homodimer.

It localises to the secreted. It is found in the extracellular space. The protein localises to the apoplast. In terms of biological role, dirigent proteins impart stereoselectivity on the phenoxy radical-coupling reaction, yielding optically active lignans from two molecules of coniferyl alcohol in the biosynthesis of lignans, flavonolignans, and alkaloids and thus plays a central role in plant secondary metabolism. This Arabidopsis thaliana (Mouse-ear cress) protein is Dirigent protein 25 (DIR25).